An 87-amino-acid polypeptide reads, in one-letter code: Defensin-like protein 81 (87 aa).

Residues 1-27 (MTIKKFLPLLLSSLMVYSLILLPIISG) form the signal peptide. Disulfide bonds link Cys33–Cys69, Cys37–Cys57, Cys43–Cys67, and Cys47–Cys68.

The protein belongs to the DEFL family.

The protein localises to the secreted. The chain is Defensin-like protein 81 from Arabidopsis thaliana (Mouse-ear cress).